The sequence spans 284 residues: Pantothenate synthetase (284 aa).

Methionine 32–histidine 39 provides a ligand contact to ATP. Histidine 39 acts as the Proton donor in catalysis. Glutamine 63 serves as a coordination point for (R)-pantoate. Residue glutamine 63 participates in beta-alanine binding. Glycine 149–aspartate 152 contributes to the ATP binding site. (R)-pantoate is bound at residue glutamine 155. Residues isoleucine 178 and methionine 186–arginine 189 contribute to the ATP site.

It belongs to the pantothenate synthetase family. Homodimer.

The protein localises to the cytoplasm. The catalysed reaction is (R)-pantoate + beta-alanine + ATP = (R)-pantothenate + AMP + diphosphate + H(+). It participates in cofactor biosynthesis; (R)-pantothenate biosynthesis; (R)-pantothenate from (R)-pantoate and beta-alanine: step 1/1. Functionally, catalyzes the condensation of pantoate with beta-alanine in an ATP-dependent reaction via a pantoyl-adenylate intermediate. In Roseobacter denitrificans (strain ATCC 33942 / OCh 114) (Erythrobacter sp. (strain OCh 114)), this protein is Pantothenate synthetase.